The following is a 717-amino-acid chain: Trimethylamine N-oxide transport system permease protein TmoV (717 aa).

Transmembrane regions (helical) follow at residues 10-30, 69-89, 120-140, 153-173, 175-195, 206-226, 238-258, 265-285, 319-339, 355-375, 402-422, 452-472, 488-508, 527-547, 574-594, 643-663, and 683-703; these read FFQW…IEVP, LPPL…FLMN, FMTF…ETIV, WAEL…ILGY, LSGK…SVFG, FILV…VMAF, ILLV…IVLF, AVII…LLGL, ILIG…ISAF, QLNI…AILL, ILFF…GSFY, IWDT…VDVL, LVLV…LVVG, LYMA…VGII, LIPV…AVIV, MLGL…GAFI, and GIGL…DHLI. The 180-residue stretch at 200-379 folds into the ABC transmembrane type-1 1 domain; it reads SMQTLSFILV…LIAILLDKMS (180 aa). The ABC transmembrane type-1 2 domain occupies 523–703; the sequence is ALVTLYMATF…FIGLIFDHLI (181 aa).

It belongs to the binding-protein-dependent transport system permease family. In terms of assembly, the complex is probably composed of two ATP-binding proteins (TmoW), two transmembrane proteins (TmoV) and a solute-binding protein (TmoX).

The protein resides in the cell inner membrane. In terms of biological role, part of the ABC transporter complex TmoXWV involved in trimethylamine N-oxide (TMAO) import. Responsible for the translocation of the substrate across the membrane. The polypeptide is Trimethylamine N-oxide transport system permease protein TmoV (Pelagibacter ubique (strain HTCC1062)).